A 415-amino-acid chain; its full sequence is Serine hydroxymethyltransferase (415 aa).

(6S)-5,6,7,8-tetrahydrofolate contacts are provided by residues Leu-121 and 125 to 127 (GHL). The residue at position 229 (Lys-229) is an N6-(pyridoxal phosphate)lysine. (6S)-5,6,7,8-tetrahydrofolate is bound at residue 352–354 (SPF).

It belongs to the SHMT family. Homodimer. Requires pyridoxal 5'-phosphate as cofactor.

It localises to the cytoplasm. The catalysed reaction is (6R)-5,10-methylene-5,6,7,8-tetrahydrofolate + glycine + H2O = (6S)-5,6,7,8-tetrahydrofolate + L-serine. It participates in one-carbon metabolism; tetrahydrofolate interconversion. It functions in the pathway amino-acid biosynthesis; glycine biosynthesis; glycine from L-serine: step 1/1. Its function is as follows. Catalyzes the reversible interconversion of serine and glycine with tetrahydrofolate (THF) serving as the one-carbon carrier. This reaction serves as the major source of one-carbon groups required for the biosynthesis of purines, thymidylate, methionine, and other important biomolecules. Also exhibits THF-independent aldolase activity toward beta-hydroxyamino acids, producing glycine and aldehydes, via a retro-aldol mechanism. The protein is Serine hydroxymethyltransferase of Methylobacillus flagellatus (strain ATCC 51484 / DSM 6875 / VKM B-1610 / KT).